A 357-amino-acid polypeptide reads, in one-letter code: Holliday junction branch migration complex subunit RuvB (357 aa).

The disordered stretch occupies residues methionine 1 to isoleucine 20. Residues methionine 1–tyrosine 185 are large ATPase domain (RuvB-L). ATP is bound by residues leucine 24, arginine 25, glycine 66, lysine 69, threonine 70, serine 71, glutamate 132–phenylalanine 134, arginine 175, tyrosine 185, and arginine 222. Residue threonine 70 participates in Mg(2+) binding. Positions glutamate 186 to aspartate 256 are small ATPAse domain (RuvB-S). The segment at threonine 259–aspartate 357 is head domain (RuvB-H). Positions 314 and 319 each coordinate DNA.

Belongs to the RuvB family. Homohexamer. Forms an RuvA(8)-RuvB(12)-Holliday junction (HJ) complex. HJ DNA is sandwiched between 2 RuvA tetramers; dsDNA enters through RuvA and exits via RuvB. An RuvB hexamer assembles on each DNA strand where it exits the tetramer. Each RuvB hexamer is contacted by two RuvA subunits (via domain III) on 2 adjacent RuvB subunits; this complex drives branch migration. In the full resolvosome a probable DNA-RuvA(4)-RuvB(12)-RuvC(2) complex forms which resolves the HJ.

It is found in the cytoplasm. It carries out the reaction ATP + H2O = ADP + phosphate + H(+). The RuvA-RuvB-RuvC complex processes Holliday junction (HJ) DNA during genetic recombination and DNA repair, while the RuvA-RuvB complex plays an important role in the rescue of blocked DNA replication forks via replication fork reversal (RFR). RuvA specifically binds to HJ cruciform DNA, conferring on it an open structure. The RuvB hexamer acts as an ATP-dependent pump, pulling dsDNA into and through the RuvAB complex. RuvB forms 2 homohexamers on either side of HJ DNA bound by 1 or 2 RuvA tetramers; 4 subunits per hexamer contact DNA at a time. Coordinated motions by a converter formed by DNA-disengaged RuvB subunits stimulates ATP hydrolysis and nucleotide exchange. Immobilization of the converter enables RuvB to convert the ATP-contained energy into a lever motion, pulling 2 nucleotides of DNA out of the RuvA tetramer per ATP hydrolyzed, thus driving DNA branch migration. The RuvB motors rotate together with the DNA substrate, which together with the progressing nucleotide cycle form the mechanistic basis for DNA recombination by continuous HJ branch migration. Branch migration allows RuvC to scan DNA until it finds its consensus sequence, where it cleaves and resolves cruciform DNA. This chain is Holliday junction branch migration complex subunit RuvB, found in Nocardia farcinica (strain IFM 10152).